Here is a 170-residue protein sequence, read N- to C-terminus: uncharacterized protein (170 aa).

Its subcellular location is the mitochondrion. This is an uncharacterized protein from Arabidopsis thaliana (Mouse-ear cress).